An 822-amino-acid polypeptide reads, in one-letter code: Telomere length regulation protein TEL2 homolog (822 aa).

The interval 442-504 (NDDEEEQPDA…ADQEKKKSAP (63 aa)) is disordered. Positions 465 to 477 (VSSQSVASDPGNG) are enriched in polar residues. Residues 480–489 (SELDSDDDLT) are compositionally biased toward acidic residues.

This sequence belongs to the TEL2 family.

It localises to the cytoplasm. Its subcellular location is the membrane. The protein resides in the nucleus. Its function is as follows. Regulator of the DNA damage response (DDR). Part of the TTT complex that is required to stabilize protein levels of the phosphatidylinositol 3-kinase-related protein kinase (PIKK) family proteins. Promotes assembly, stabilizes and maintains the activity of TORC complexes, which regulate cell growth and survival in response to nutrient and hormonal signals. May be involved in telomere length regulation. The polypeptide is Telomere length regulation protein TEL2 homolog (telo2) (Danio rerio (Zebrafish)).